The sequence spans 229 residues: DNA mismatch repair protein MutH (229 aa).

Belongs to the MutH family.

Its subcellular location is the cytoplasm. Sequence-specific endonuclease that cleaves unmethylated GATC sequences. It is involved in DNA mismatch repair. The polypeptide is DNA mismatch repair protein MutH (Escherichia coli O17:K52:H18 (strain UMN026 / ExPEC)).